A 349-amino-acid chain; its full sequence is [LysW]-L-2-aminoadipate/[LysW]-L-glutamate phosphate reductase (349 aa).

10-13 provides a ligand contact to NADP(+); it reads SGYT. C150 is an active-site residue. N316 serves as a coordination point for NADP(+).

It belongs to the NAGSA dehydrogenase family. Type 1 subfamily. LysY sub-subfamily.

The protein localises to the cytoplasm. It carries out the reaction [amino-group carrier protein]-C-terminal-N-(1-carboxy-5-oxopentan-1-yl)-L-glutamine + phosphate + NADP(+) = [amino-group carrier protein]-C-terminal-N-(1-carboxy-5-phosphooxy-5-oxopentan-1-yl)-L-glutamine + NADPH + H(+). The catalysed reaction is [amino-group carrier protein]-C-terminal-gamma-(L-glutamyl-5-semialdehyde)-L-glutamate + phosphate + NADP(+) = [amino-group carrier protein]-C-terminal-gamma-(5-phospho-L-glutamyl)-L-glutamate + NADPH + H(+). It functions in the pathway amino-acid biosynthesis; L-lysine biosynthesis via AAA pathway; L-lysine from L-alpha-aminoadipate (Thermus route): step 3/5. It participates in amino-acid biosynthesis; L-arginine biosynthesis. Functionally, involved in both the arginine and lysine biosynthetic pathways. This is [LysW]-L-2-aminoadipate/[LysW]-L-glutamate phosphate reductase from Sulfurisphaera tokodaii (strain DSM 16993 / JCM 10545 / NBRC 100140 / 7) (Sulfolobus tokodaii).